A 211-amino-acid chain; its full sequence is MEPPLKRCRLCHQALPKLPQLPFEMIDKILSHLPFDLHVDVVGASAATRLRALRRPDRLTRYHEYDLAADELFAAHWNIEAADPARPYVGQLCRSTCASAAQKFFNERVPRAAAMCMLNAPRAESDSVLTRRWNWWGLTRTLLIHEANSGRGRRPARVRVDADEACIGYHAPFCDASVFEFNAQPDHVVFVLLDDDKIELNMYGKRVYRIV.

In terms of biological role, involved in late/very late gene activation. This is Late expression factor 7 (LEF-7) from Orgyia pseudotsugata multicapsid polyhedrosis virus (OpMNPV).